The chain runs to 279 residues: Acetyl-coenzyme A carboxylase carboxyl transferase subunit beta (279 aa).

Residues 23–279 (LWWKCEECGA…LTTLLSLMKL (257 aa)) form the CoA carboxyltransferase N-terminal domain. Residues C27, C30, C46, and C49 each contribute to the Zn(2+) site. The segment at 27–49 (CEECGAALHKKQMEASDHTCPQC) adopts a C4-type zinc-finger fold.

This sequence belongs to the AccD/PCCB family. As to quaternary structure, acetyl-CoA carboxylase is a heterohexamer composed of biotin carboxyl carrier protein (AccB), biotin carboxylase (AccC) and two subunits each of ACCase subunit alpha (AccA) and ACCase subunit beta (AccD). Zn(2+) is required as a cofactor.

The protein resides in the cytoplasm. The enzyme catalyses N(6)-carboxybiotinyl-L-lysyl-[protein] + acetyl-CoA = N(6)-biotinyl-L-lysyl-[protein] + malonyl-CoA. Its pathway is lipid metabolism; malonyl-CoA biosynthesis; malonyl-CoA from acetyl-CoA: step 1/1. Its function is as follows. Component of the acetyl coenzyme A carboxylase (ACC) complex. Biotin carboxylase (BC) catalyzes the carboxylation of biotin on its carrier protein (BCCP) and then the CO(2) group is transferred by the transcarboxylase to acetyl-CoA to form malonyl-CoA. The chain is Acetyl-coenzyme A carboxylase carboxyl transferase subunit beta from Chlorobium chlorochromatii (strain CaD3).